The primary structure comprises 170 residues: Shikimate kinase (170 aa).

Residue 15-20 (GTGKTT) coordinates ATP. Threonine 19 lines the Mg(2+) pocket. 3 residues coordinate substrate: aspartate 37, arginine 61, and glycine 82. An ATP-binding site is contributed by arginine 120. Arginine 138 serves as a coordination point for substrate. Glutamine 154 is an ATP binding site.

It belongs to the shikimate kinase family. In terms of assembly, monomer. It depends on Mg(2+) as a cofactor.

The protein localises to the cytoplasm. It carries out the reaction shikimate + ATP = 3-phosphoshikimate + ADP + H(+). Its pathway is metabolic intermediate biosynthesis; chorismate biosynthesis; chorismate from D-erythrose 4-phosphate and phosphoenolpyruvate: step 5/7. Functionally, catalyzes the specific phosphorylation of the 3-hydroxyl group of shikimic acid using ATP as a cosubstrate. The chain is Shikimate kinase from Staphylococcus epidermidis (strain ATCC 35984 / DSM 28319 / BCRC 17069 / CCUG 31568 / BM 3577 / RP62A).